Reading from the N-terminus, the 129-residue chain is Small ribosomal subunit protein uS11 (129 aa).

Belongs to the universal ribosomal protein uS11 family. Part of the 30S ribosomal subunit. Interacts with proteins S7 and S18. Binds to IF-3.

In terms of biological role, located on the platform of the 30S subunit, it bridges several disparate RNA helices of the 16S rRNA. Forms part of the Shine-Dalgarno cleft in the 70S ribosome. The chain is Small ribosomal subunit protein uS11 from Bartonella quintana (strain Toulouse) (Rochalimaea quintana).